The primary structure comprises 214 residues: MSKPPPKPAKPGQVKVYRALFTFDPRTPDELYFEEGDILYISDTSDSNWWKGTCRGRTGLIPSNYVAEQAESIDNPMHEAAKRGNLSWLRECLDNKVGINGLDKAGNTSLYWACHGGHKDVVEILLSQPNCELNQQNKLGDTPLHAAAWKGYSDIVEMLLNKNARTDVVNNEKKTALDMATNAQCASLLKRKLGGVILRTHSNAEEYLDDEDSD.

An SH3 domain is found at 12–71 (GQVKVYRALFTFDPRTPDELYFEEGDILYISDTSDSNWWKGTCRGRTGLIPSNYVAEQAE). 3 ANK repeats span residues 72–101 (SIDNPMHEAAKRGNLSWLRECLDNKVGING), 105–135 (AGNTSLYWACHGGHKDVVEILLSQPNCELNQ), and 139–168 (LGDTPLHAAAWKGYSDIVEMLLNKNARTDV).

It is found in the cytoplasm. Functionally, induces bone resorption, acting probably through a signaling cascade which results in the secretion of factor(s) enhancing osteoclast formation and activity. The chain is Osteoclast-stimulating factor 1 (ostf1) from Danio rerio (Zebrafish).